The primary structure comprises 462 residues: tRNA wybutosine-synthesizing protein 2 (462 aa).

Residues Ser-257, Lys-264, and 305-306 each bind S-adenosyl-L-methionine; that span reads EL.

It belongs to the class I-like SAM-binding methyltransferase superfamily. TRM5/TYW2 family.

Its subcellular location is the cytoplasm. It catalyses the reaction 4-demethylwyosine(37) in tRNA(Phe) + S-adenosyl-L-methionine = 4-demethyl-7-[(3S)-3-amino-3-carboxypropyl]wyosine(37) in tRNA(Phe) + S-methyl-5'-thioadenosine + H(+). It participates in tRNA modification; wybutosine-tRNA(Phe) biosynthesis. Functionally, S-adenosyl-L-methionine-dependent transferase that acts as a component of the wybutosine biosynthesis pathway. Wybutosine is a hyper modified guanosine with a tricyclic base found at the 3'-position adjacent to the anticodon of eukaryotic phenylalanine tRNA. Catalyzes the transfer of the alpha-amino-alpha-carboxypropyl (acp) group from S-adenosyl-L-methionine to the C-7 position of 4-demethylwyosine (imG-14) to produce wybutosine-86. This chain is tRNA wybutosine-synthesizing protein 2 (TRM12), found in Saccharomyces cerevisiae (strain ATCC 204508 / S288c) (Baker's yeast).